Consider the following 1123-residue polypeptide: Alpha-mannosidase E (1123 aa).

The first 21 residues, 1–21 (MNKTKLIKIIFVIGVWILLST), serve as a signal peptide directing secretion. N-linked (GlcNAc...) asparagine glycans are attached at residues Asn2 and Asn38. The Extracellular segment spans residues 22–1072 (FIINIYNENF…KYNRPNHLAL (1051 aa)). Residues His67 and Asp69 each contribute to the Zn(2+) site. N-linked (GlcNAc...) asparagine glycosylation is present at Asn140. Residues Asp150 and His409 each contribute to the Zn(2+) site. Asp150 serves as the catalytic Nucleophile. N-linked (GlcNAc...) asparagine glycans are attached at residues Asn521, Asn675, Asn858, Asn887, Asn975, and Asn990. A helical transmembrane segment spans residues 1073–1093 (ILSLSIGTPAGILIIVIALVV). The Cytoplasmic segment spans residues 1094–1123 (IYKKRKNRKTLTSSYSLLNLILKDRADSSP).

This sequence belongs to the glycosyl hydrolase 38 family. Requires Zn(2+) as cofactor.

The protein localises to the membrane. The catalysed reaction is Hydrolysis of terminal, non-reducing alpha-D-mannose residues in alpha-D-mannosides.. The protein is Alpha-mannosidase E (manE) of Dictyostelium discoideum (Social amoeba).